Consider the following 204-residue polypeptide: Protein G1-like5 (204 aa).

Disordered regions lie at residues M1–K45 and R157–A204. The segment covering T26–S39 has biased composition (low complexity). The ALOG domain occupies R40 to K167. The Nuclear localization signal motif lies at K165 to K169.

The protein belongs to the plant homeotic and developmental regulators ALOG protein family.

It is found in the nucleus. Functionally, probable transcription regulator that acts as a developmental regulator by promoting cell growth in response to light. In Oryza sativa subsp. japonica (Rice), this protein is Protein G1-like5 (G1L5).